We begin with the raw amino-acid sequence, 312 residues long: tRNA dimethylallyltransferase (312 aa).

Residue Gly-10–Ser-17 coordinates ATP. Thr-12–Ser-17 lines the substrate pocket. Residues Asp-35 to Gln-38 form an interaction with substrate tRNA region.

It belongs to the IPP transferase family. As to quaternary structure, monomer. Requires Mg(2+) as cofactor.

The catalysed reaction is adenosine(37) in tRNA + dimethylallyl diphosphate = N(6)-dimethylallyladenosine(37) in tRNA + diphosphate. Its function is as follows. Catalyzes the transfer of a dimethylallyl group onto the adenine at position 37 in tRNAs that read codons beginning with uridine, leading to the formation of N6-(dimethylallyl)adenosine (i(6)A). The chain is tRNA dimethylallyltransferase from Anaplasma phagocytophilum (strain HZ).